Reading from the N-terminus, the 325-residue chain is D-alanine--D-alanine ligase (325 aa).

An ATP-grasp domain is found at 109 to 309; the sequence is KRVCKERMLP…FCTLLDQLIE (201 aa). Residue 136-191 participates in ATP binding; the sequence is CRRLPFPMFVKPANLGSSVGISKAHDEQELEAAFSLAKQYDRKIIVERGIEGRELE. 3 residues coordinate Mg(2+): D262, E276, and N278.

It belongs to the D-alanine--D-alanine ligase family. The cofactor is Mg(2+). Mn(2+) serves as cofactor.

It is found in the cytoplasm. It carries out the reaction 2 D-alanine + ATP = D-alanyl-D-alanine + ADP + phosphate + H(+). The protein operates within cell wall biogenesis; peptidoglycan biosynthesis. Functionally, cell wall formation. In Solibacter usitatus (strain Ellin6076), this protein is D-alanine--D-alanine ligase.